A 341-amino-acid polypeptide reads, in one-letter code: Peptidoglycan recognition protein 3 (341 aa).

Positions 1 to 17 are cleaved as a signal peptide; the sequence is MGTLPWLLAFFILGLQA. N-acetylmuramoyl-L-alanine amidase domains lie at 77-179 and 200-325; these read TIGW…KVCP and PAKY…ILSP. Residue asparagine 113 is glycosylated (N-linked (GlcNAc...) asparagine). Cystine bridges form between cysteine 178/cysteine 300, cysteine 194/cysteine 238, and cysteine 214/cysteine 220. Peptidoglycan contacts are provided by histidine 231, arginine 235, and tyrosine 242. Residues 264–269 form an interaction with murein region; that stretch reads HTYGFN.

Belongs to the N-acetylmuramoyl-L-alanine amidase 2 family. As to quaternary structure, monomer. Homodimer; disulfide-linked. Heterodimer with PGLYRP4; disulfide-linked. In terms of processing, N-glycosylated. In terms of tissue distribution, detected in skin epidermis, eccrine sweat glands and ducts, ciliary body epithelial cells of the eye, in small intestine, colon, stomach and in mature epithelial cells of the tongue (at protein level). Highly expressed in skin and esophagus, expressed also in tonsils and thymus and to a much lesser extent in the stomach, descending colon, rectum and brain.

The protein localises to the secreted. Its function is as follows. Pattern receptor that binds to murein peptidoglycans (PGN) of Gram-positive bacteria. Has bactericidal activity towards Gram-positive bacteria. May kill Gram-positive bacteria by interfering with peptidoglycan biosynthesis. Also binds to Gram-negative bacteria, and has bacteriostatic activity towards Gram-negative bacteria. Plays a role in innate immunity. The sequence is that of Peptidoglycan recognition protein 3 (PGLYRP3) from Homo sapiens (Human).